The following is a 166-amino-acid chain: Cytochrome c-type biogenesis protein CcmE (166 aa).

Topologically, residues 1–8 are cytoplasmic; that stretch reads MNAVRRKK. The helical; Signal-anchor for type II membrane protein transmembrane segment at 9–29 threads the bilayer; that stretch reads LMWVMFTLAGAVIAVALVIYA. Over 30–166 the chain is Periplasmic; that stretch reads IGKQTDYYFD…KLHETKTLQQ (137 aa). Residues H124 and Y128 each coordinate heme. A disordered region spans residues 133 to 166; sequence VAKSMKENNRSGAVPSSEQYNPAEKLHETKTLQQ. A compositionally biased stretch (polar residues) spans 142-152; sequence RSGAVPSSEQY. Residues 156–166 show a composition bias toward basic and acidic residues; sequence EKLHETKTLQQ.

The protein belongs to the CcmE/CycJ family.

The protein localises to the cell inner membrane. Its function is as follows. Heme chaperone required for the biogenesis of c-type cytochromes. Transiently binds heme delivered by CcmC and transfers the heme to apo-cytochromes in a process facilitated by CcmF and CcmH. The sequence is that of Cytochrome c-type biogenesis protein CcmE from Psychrobacter arcticus (strain DSM 17307 / VKM B-2377 / 273-4).